The primary structure comprises 343 residues: Phosphate acyltransferase (343 aa).

Belongs to the PlsX family. As to quaternary structure, homodimer. Probably interacts with PlsY.

The protein resides in the cytoplasm. It carries out the reaction a fatty acyl-[ACP] + phosphate = an acyl phosphate + holo-[ACP]. It participates in lipid metabolism; phospholipid metabolism. Functionally, catalyzes the reversible formation of acyl-phosphate (acyl-PO(4)) from acyl-[acyl-carrier-protein] (acyl-ACP). This enzyme utilizes acyl-ACP as fatty acyl donor, but not acyl-CoA. The chain is Phosphate acyltransferase from Acidovorax sp. (strain JS42).